The following is a 429-amino-acid chain: Probable M18 family aminopeptidase 2 (429 aa).

Zn(2+) contacts are provided by His-82, His-156, and His-401.

Belongs to the peptidase M18 family. Zn(2+) is required as a cofactor.

The protein is Probable M18 family aminopeptidase 2 of Pseudomonas entomophila (strain L48).